The primary structure comprises 1501 residues: Opaque-specific ABC transporter CDR3 (1501 aa).

Residues 1 to 502 (MAKTSQAEGQ…KRYWDRMRGD (502 aa)) lie on the Cytoplasmic side of the membrane. The disordered stretch occupies residues 58–87 (TYTTATMHPNGINPISDKTDPTLDPESPSF). One can recognise an ABC transporter 1 domain in the interval 140-395 (KYARNIFNKF…FKKMGFVCQD (256 aa)). A helical membrane pass occupies residues 503–523 (IIVPLSTVAGNIAMALILSSV). Asn530 carries an N-linked (GlcNAc...) asparagine glycan. Helical transmembrane passes span 540–560 (VMYY…YNMY), 589–609 (FPLK…MVNF), 614–634 (GAFF…SHLF), 653–673 (LLLF…YMLG), and 755–775 (FGVL…FVQT). The Cytoplasmic segment spans residues 776 to 1175 (NKSSISKGET…LFQQYWRTPS (400 aa)). In terms of domain architecture, ABC transporter 2 spans 840–1083 (FHWRNLTYTV…LIEYFERNGA (244 aa)). 876-883 (GASGAGKT) is an ATP binding site. 7 helical membrane-spanning segments follow: residues 1176-1196 (YIYS…FTYY), 1212-1232 (IFSM…LFVT), 1261-1281 (IPYQ…PVGL), 1297-1317 (LMWL…QFCI), 1325-1345 (YAAN…GVIA), 1353-1375 (FWVF…SIGL), and 1451-1471 (GIFI…YWLF).

The protein belongs to the ABC transporter superfamily. ABCG family. PDR (TC 3.A.1.205) subfamily.

Its subcellular location is the membrane. This chain is Opaque-specific ABC transporter CDR3 (CDR3), found in Candida albicans (Yeast).